The following is a 79-amino-acid chain: Sec-independent protein translocase protein TatA (79 aa).

A helical membrane pass occupies residues 1–21 (MGSFSIWHWLIVLAIVVLVFG). Residues 43 to 79 (VKDGSTSTDTPAAAPGQVAGQTAADKTTIDVEAKQKG) form a disordered region. Positions 69–79 (TTIDVEAKQKG) are enriched in basic and acidic residues.

It belongs to the TatA/E family. In terms of assembly, the Tat system comprises two distinct complexes: a TatABC complex, containing multiple copies of TatA, TatB and TatC subunits, and a separate TatA complex, containing only TatA subunits. Substrates initially bind to the TatABC complex, which probably triggers association of the separate TatA complex to form the active translocon.

It localises to the cell inner membrane. Its function is as follows. Part of the twin-arginine translocation (Tat) system that transports large folded proteins containing a characteristic twin-arginine motif in their signal peptide across membranes. TatA could form the protein-conducting channel of the Tat system. This is Sec-independent protein translocase protein TatA from Delftia acidovorans (strain DSM 14801 / SPH-1).